The chain runs to 146 residues: NADH-ubiquinone oxidoreductase chain 6 (146 aa).

The next 4 membrane-spanning stretches (helical) occupy residues 10–30 (ILAI…LLFV), 43–63 (LMGI…FLFI), 81–101 (VIVL…PIAI), and 124–144 (APML…AIAM).

The protein belongs to the complex I subunit 6 family.

Its subcellular location is the mitochondrion membrane. It catalyses the reaction a ubiquinone + NADH + 5 H(+)(in) = a ubiquinol + NAD(+) + 4 H(+)(out). Its function is as follows. Core subunit of the mitochondrial membrane respiratory chain NADH dehydrogenase (Complex I) that is believed to belong to the minimal assembly required for catalysis. Complex I functions in the transfer of electrons from NADH to the respiratory chain. The immediate electron acceptor for the enzyme is believed to be ubiquinone. The sequence is that of NADH-ubiquinone oxidoreductase chain 6 (NAD6) from Candida albicans (strain SC5314 / ATCC MYA-2876) (Yeast).